The primary structure comprises 1055 residues: DIS3-like exonuclease 2 (1055 aa).

Disordered stretches follow at residues 1 to 109 (MKSA…SSPE) and 229 to 249 (SAAK…KARQ). The span at 17 to 32 (HKKKRNRPQKQNRRSK) shows a compositional bias: basic residues. Over residues 39-59 (EDAHVEESLDGRDSSRSKAKD) the composition is skewed to basic and acidic residues. Residues 97-108 (PRRSASPLLSSP) show a composition bias toward low complexity. Residues D488 and D497 each contribute to the Mg(2+) site.

It belongs to the RNR ribonuclease family. DIS3L2 subfamily. Mg(2+) serves as cofactor. It depends on Mn(2+) as a cofactor. In terms of tissue distribution, widely expressed.

The protein localises to the cytoplasm. It localises to the P-body. Its function is as follows. 3'-5'-exoribonuclease that specifically recognizes RNAs polyuridylated at their 3' end and mediates their degradation. Component of an exosome-independent RNA degradation pathway that mediates degradation of cytoplasmic mRNAs that have been deadenylated and subsequently uridylated at their 3'. The polypeptide is DIS3-like exonuclease 2 (SOV) (Arabidopsis thaliana (Mouse-ear cress)).